Consider the following 338-residue polypeptide: Glyceraldehyde-3-phosphate dehydrogenase, cytosolic (338 aa).

NAD(+)-binding positions include 14-15, D36, and R83; that span reads RI. D-glyceraldehyde 3-phosphate contacts are provided by residues 154–156, T185, 214–215, and R237; these read SCT and TG. The active-site Nucleophile is C155. Residue N319 coordinates NAD(+).

The protein belongs to the glyceraldehyde-3-phosphate dehydrogenase family. As to quaternary structure, homotetramer.

Its subcellular location is the cytoplasm. It carries out the reaction D-glyceraldehyde 3-phosphate + phosphate + NAD(+) = (2R)-3-phospho-glyceroyl phosphate + NADH + H(+). Its pathway is carbohydrate degradation; glycolysis; pyruvate from D-glyceraldehyde 3-phosphate: step 1/5. In terms of biological role, key enzyme in glycolysis that catalyzes the first step of the pathway by converting D-glyceraldehyde 3-phosphate (G3P) into 3-phospho-D-glyceroyl phosphate. Essential for the maintenance of cellular ATP levels and carbohydrate metabolism. The polypeptide is Glyceraldehyde-3-phosphate dehydrogenase, cytosolic (GAPC) (Ranunculus acris (Meadow buttercup)).